Reading from the N-terminus, the 583-residue chain is Sensor protein SrrB (583 aa).

Over 1–11 (MMSRLNSVVIK) the chain is Cytoplasmic. A helical transmembrane segment spans residues 12–32 (LWLTIILIVTTVLILLSIALI). Residues 33–174 (TFMQYYFTQE…SIEDTNNAIT (142 aa)) are Extracellular-facing. Residues 175 to 195 (IITIITAVIFLTITTVFAFFL) traverse the membrane as a helical segment. Topologically, residues 196–583 (SSRITKPLRR…TFIIKLPKPE (388 aa)) are cytoplasmic. The HAMP domain occupies 197 to 249 (SRITKPLRRLRDQATRVSEGDYSYKPSVTTKDEIGQLSQAFNQMSTEIEEHVD). One can recognise a Histidine kinase domain in the interval 366-583 (NVSHELRTPI…TFIIKLPKPE (218 aa)). The residue at position 369 (H369) is a Phosphohistidine; by autocatalysis.

Its subcellular location is the cell membrane. It catalyses the reaction ATP + protein L-histidine = ADP + protein N-phospho-L-histidine.. Its function is as follows. Member of the two-component regulatory system SrrA/SrrB, which is involved in the global regulation of staphylococcal virulence factors in response to environmental oxygen levels as well as biofilm formation. Also plays an essential role in host-derived nitric oxide resistance by regulating hmp/flavohemoglobin, an enzyme that detoxifies nitric oxide by converting it to nitrate. Functions as a sensor protein kinase which is autophosphorylated at a histidine residue and transfers its phosphate group to SrrA. In turn, SrrA binds to the upstream promoter regions of the target genes to positively and negatively regulate their expression. The polypeptide is Sensor protein SrrB (srrB) (Staphylococcus aureus (strain MRSA252)).